We begin with the raw amino-acid sequence, 95 residues long: MLRVVLFAAILVFSIANSEIIDKSLEQSGPIQDSSNFALAVNGEELPTDIALEGQSEVMIRAKRYYGCGCGCGCATVAAVSPVPCGGCCGCGYGK.

2 consecutive repeat copies span residues 67–74 (GCGCGCGC) and 85–92 (CGGCCGCG). A 2 X 8 AA approximate repeats region spans residues 67-92 (GCGCGCGCATVAAVSPVPCGGCCGCG).

This is an uncharacterized protein from Caenorhabditis elegans.